A 691-amino-acid chain; its full sequence is DNA ligase (691 aa).

Residues 36-40, 85-86, and E118 each bind NAD(+); these read DAEYD and SL. Catalysis depends on K120, which acts as the N6-AMP-lysine intermediate. NAD(+)-binding residues include R141, E178, K295, and K319. The Zn(2+) site is built by C413, C416, C431, and C437. The BRCT domain occupies 595–684; sequence GRPQPLAGQT…ESASSEDAQP (90 aa).

The protein belongs to the NAD-dependent DNA ligase family. LigA subfamily. Mg(2+) is required as a cofactor. Requires Mn(2+) as cofactor.

It carries out the reaction NAD(+) + (deoxyribonucleotide)n-3'-hydroxyl + 5'-phospho-(deoxyribonucleotide)m = (deoxyribonucleotide)n+m + AMP + beta-nicotinamide D-nucleotide.. Functionally, DNA ligase that catalyzes the formation of phosphodiester linkages between 5'-phosphoryl and 3'-hydroxyl groups in double-stranded DNA using NAD as a coenzyme and as the energy source for the reaction. It is essential for DNA replication and repair of damaged DNA. The sequence is that of DNA ligase from Chromohalobacter salexigens (strain ATCC BAA-138 / DSM 3043 / CIP 106854 / NCIMB 13768 / 1H11).